A 960-amino-acid polypeptide reads, in one-letter code: Protein mono-ADP-ribosyltransferase PARP10 (960 aa).

An ADP-ribosyl glutamic acid modification is found at Glu-103. The segment covering 325–341 (SMGSTSPVDPVESSTEL) has biased composition (polar residues). A disordered region spans residues 325 to 346 (SMGSTSPVDPVESSTELPEQVG). Ser-381 and Ser-388 each carry phosphoserine. The tract at residues 553-576 (SPHGGEDRVPLEMEKEKPGGPGET) is disordered. Over residues 555–570 (HGGEDRVPLEMEKEKP) the composition is skewed to basic and acidic residues. Residues 604 to 621 (LEEEATLQLAIHRSLESQ) carry the Ubiquitin-interacting motif. The residue at position 617 (Ser-617) is a Phosphoserine. Positions 649 to 856 (DEDTGGEAQL…CAHGFNRSFC (208 aa)) are myc binding. Residues 755-960 (PNLSEQGLKE…TCKNILPGTP (206 aa)) enclose the PARP catalytic domain. Positions 780-787 (QDVVRAFY) match the PIP-box motif. At Glu-831 the chain carries ADP-ribosyl glutamic acid.

The protein belongs to the ARTD/PARP family. In terms of assembly, interacts with MYC. Interacts with PARP14. Interacts (via-PIP box and ubiquitin-interacting motifs) with PCNA. Stimulated through its phosphorylation by CDK2. Acquires CDK-dependent phosphorylation through late-G1 to S phase, and from prometaphase to cytokinesis in the nucleolar organizing regions. Phosphorylation is suppressed in growth-arrested cells. Post-translationally, auto-mono-ADP-ribosylated on glutamate and lysine residues.

It is found in the cytoplasm. It localises to the nucleus. The catalysed reaction is L-lysyl-[protein] + NAD(+) = N(6)-(ADP-D-ribosyl)-L-lysyl-[protein] + nicotinamide + H(+). The enzyme catalyses L-aspartyl-[protein] + NAD(+) = 4-O-(ADP-D-ribosyl)-L-aspartyl-[protein] + nicotinamide. It catalyses the reaction L-glutamyl-[protein] + NAD(+) = 5-O-(ADP-D-ribosyl)-L-glutamyl-[protein] + nicotinamide. Its function is as follows. ADP-ribosyltransferase that mediates mono-ADP-ribosylation of glutamate and aspartate residues on target proteins. In contrast to PARP1 and PARP2, it is not able to mediate poly-ADP-ribosylation. Catalyzes mono-ADP-ribosylation of GSK3B, leading to negatively regulate GSK3B kinase activity. Involved in translesion DNA synthesis in response to DNA damage via its interaction with PCNA. This Mus musculus (Mouse) protein is Protein mono-ADP-ribosyltransferase PARP10.